We begin with the raw amino-acid sequence, 221 residues long: Pectate lyase C (221 aa).

The N-terminal stretch at 1–28 (MKRLAGTVILSGLLVCGFGQALPEKALA) is a signal peptide.

This sequence belongs to the polysaccharide lyase 3 family. The cofactor is Ca(2+).

The protein localises to the secreted. The enzyme catalyses Eliminative cleavage of (1-&gt;4)-alpha-D-galacturonan to give oligosaccharides with 4-deoxy-alpha-D-galact-4-enuronosyl groups at their non-reducing ends.. It carries out the reaction Eliminative cleavage of (1-&gt;4)-alpha-D-galacturonan methyl ester to give oligosaccharides with 4-deoxy-6-O-methyl-alpha-D-galact-4-enuronosyl groups at their non-reducing ends.. It functions in the pathway glycan metabolism; pectin degradation; 2-dehydro-3-deoxy-D-gluconate from pectin: step 2/5. Functionally, catalyzes the depolymerization of both polygalacturonate and pectins of methyl esterification degree from 22 to 89%, with an endo mode of action. In contrast to the majority of pectate lyases, displays high activity on highly methylated pectins. This Bacillus licheniformis (strain ATCC 14580 / DSM 13 / JCM 2505 / CCUG 7422 / NBRC 12200 / NCIMB 9375 / NCTC 10341 / NRRL NRS-1264 / Gibson 46) protein is Pectate lyase C (pelC).